The chain runs to 95 residues: Microcin E492 immunity protein (95 aa).

3 consecutive transmembrane segments (helical) span residues 1–21 (MTLLSFGFSPVFFSVMAFCII), 35–55 (VIVLILLTFFICFLYPLTKVY), and 67–87 (YLFCFISTLIAIAINVVILTI).

The protein belongs to the MceB microcin immunity protein family.

The protein localises to the cell inner membrane. Functionally, protect the producing cell against microcin E492. The polypeptide is Microcin E492 immunity protein (Klebsiella pneumoniae).